We begin with the raw amino-acid sequence, 870 residues long: Lon protease (870 aa).

Residues 1–270 (MPTNSYRFLV…KLYEHIHTFA (270 aa)) enclose the Lon N-terminal domain. Position 454–461 (454–461 (GPPGTGKT)) interacts with ATP. The 180-residue stretch at 691–870 (SPQIGTVTGL…YQQIYDFIFK (180 aa)) folds into the Lon proteolytic domain. Catalysis depends on residues Ser777 and Lys820.

Belongs to the peptidase S16 family. As to quaternary structure, homohexamer. Organized in a ring with a central cavity.

It localises to the cytoplasm. The enzyme catalyses Hydrolysis of proteins in presence of ATP.. Its function is as follows. ATP-dependent serine protease that mediates the selective degradation of mutant and abnormal proteins as well as certain short-lived regulatory proteins. Required for cellular homeostasis and for survival from DNA damage and developmental changes induced by stress. Degrades polypeptides processively to yield small peptide fragments that are 5 to 10 amino acids long. Binds to DNA in a double-stranded, site-specific manner. In Mesomycoplasma hyopneumoniae (strain 232) (Mycoplasma hyopneumoniae), this protein is Lon protease.